The sequence spans 135 residues: Galectin-1 (135 aa).

A2 is modified (N-acetylalanine). Residues 4–135 enclose the Galectin domain; it reads GLVASNLNLK…DFKIKCVAFE (132 aa). An N6-acetyllysine mark is found at K13, K19, and K29. At S30 the chain carries Phosphoserine. A beta-D-galactoside contacts are provided by residues 45-49, H53, N62, and 69-72; these read HFNPR and WGTE. K108 carries the post-translational modification N6-acetyllysine; alternate. K108 carries the post-translational modification N6-succinyllysine; alternate. The residue at position 128 (K128) is an N6-acetyllysine.

Homodimer. Binds LGALS3BP. Interacts with CD2, CD3, CD4, CD6, CD7, CD43, ALCAM and CD45. Interacts with laminin (via poly-N-acetyllactosamine). Interacts with SUSD2. Interacts with cargo receptor TMED10; the interaction mediates the translocation from the cytoplasm into the ERGIC (endoplasmic reticulum-Golgi intermediate compartment) and thereby secretion. Interacts with CD69.

The protein resides in the secreted. It localises to the extracellular space. Its subcellular location is the extracellular matrix. It is found in the cytoplasm. Lectin that binds beta-galactoside and a wide array of complex carbohydrates. Plays a role in regulating apoptosis, cell proliferation and cell differentiation. Inhibits CD45 protein phosphatase activity and therefore the dephosphorylation of Lyn kinase. Strong inducer of T-cell apoptosis. Plays a negative role in Th17 cell differentiation via activation of the receptor CD69. The polypeptide is Galectin-1 (Lgals1) (Rattus norvegicus (Rat)).